The sequence spans 450 residues: MENIHDLWDRVLGEIERKISKPSFETWLKSTKAHSLRGDTLVIVAPNEFARDWLDSRYSHLIAETIYAITGEELAVKFIIPPNQADEKLELPSSAKKQRKPYEEANDFPQSMLNPKYTFDTFVIGSGNRFAHAASLAVAEAPAKAYNPLFIYGGVGLGKTHLMHAIGHYVIEHNPSAKVVYLSSEKFTNEFINAIRDNRPDDFRNKYRNVDVLLIDDIQFLAGKEQTQEEFFHTFNTLHEESKQIVISSDRPPKEIPTLEDRLRSRFEWGLITDITPPDLETRIAILRKKAKAEGFDIPNEVMLYIANQIDSNIRELEGALIRVVAYSSLINKEITADLAAEALKDIIPSAKPKVITIQDIQRVVGQHFNIKLEDFKAKKRTKSVAFPRQIAMYLSRELTDCSLPKIGDEFGGRDHTTVIHAHEKISKLLQTDTQLQKHLKEIQEKLKQL.

Residues 1-84 (MENIHDLWDR…AVKFIIPPNQ (84 aa)) are domain I, interacts with DnaA modulators. The domain II stretch occupies residues 84–111 (QADEKLELPSSAKKQRKPYEEANDFPQS). Positions 112-328 (MLNPKYTFDT…GALIRVVAYS (217 aa)) are domain III, AAA+ region. Residues Gly156, Gly158, Lys159, and Thr160 each coordinate ATP. Residues 329–450 (SLINKEITAD…KEIQEKLKQL (122 aa)) form a domain IV, binds dsDNA region.

The protein belongs to the DnaA family. As to quaternary structure, oligomerizes as a right-handed, spiral filament on DNA at oriC.

The protein resides in the cytoplasm. Plays an essential role in the initiation and regulation of chromosomal replication. ATP-DnaA binds to the origin of replication (oriC) to initiate formation of the DNA replication initiation complex once per cell cycle. Binds the DnaA box (a 9 base pair repeat at the origin) and separates the double-stranded (ds)DNA. Forms a right-handed helical filament on oriC DNA; dsDNA binds to the exterior of the filament while single-stranded (ss)DNA is stabiized in the filament's interior. The ATP-DnaA-oriC complex binds and stabilizes one strand of the AT-rich DNA unwinding element (DUE), permitting loading of DNA polymerase. After initiation quickly degrades to an ADP-DnaA complex that is not apt for DNA replication. Binds acidic phospholipids. In Geobacillus thermodenitrificans (strain NG80-2), this protein is Chromosomal replication initiator protein DnaA.